We begin with the raw amino-acid sequence, 152 residues long: Xanthine-guanine phosphoribosyltransferase (152 aa).

5-phospho-alpha-D-ribose 1-diphosphate is bound by residues 37-38 (RG), R69, and 88-96 (DDLVDTGVT). R69 lines the GMP pocket. Position 89 (D89) interacts with Mg(2+). Positions 92 and 135 each coordinate guanine. Residues D92 and I135 each contribute to the xanthine site. Residues 92–96 (DTGVT) and 134–135 (WI) each bind GMP.

It belongs to the purine/pyrimidine phosphoribosyltransferase family. XGPT subfamily. As to quaternary structure, homotetramer. It depends on Mg(2+) as a cofactor.

The protein localises to the cell inner membrane. The catalysed reaction is GMP + diphosphate = guanine + 5-phospho-alpha-D-ribose 1-diphosphate. It carries out the reaction XMP + diphosphate = xanthine + 5-phospho-alpha-D-ribose 1-diphosphate. It catalyses the reaction IMP + diphosphate = hypoxanthine + 5-phospho-alpha-D-ribose 1-diphosphate. The protein operates within purine metabolism; GMP biosynthesis via salvage pathway; GMP from guanine: step 1/1. It functions in the pathway purine metabolism; XMP biosynthesis via salvage pathway; XMP from xanthine: step 1/1. Its function is as follows. Purine salvage pathway enzyme that catalyzes the transfer of the ribosyl-5-phosphate group from 5-phospho-alpha-D-ribose 1-diphosphate (PRPP) to the N9 position of the 6-oxopurines guanine and xanthine to form the corresponding ribonucleotides GMP (guanosine 5'-monophosphate) and XMP (xanthosine 5'-monophosphate), with the release of PPi. To a lesser extent, also acts on hypoxanthine. The sequence is that of Xanthine-guanine phosphoribosyltransferase from Sodalis glossinidius (strain morsitans).